Here is a 322-residue protein sequence, read N- to C-terminus: Malate dehydrogenase 1 (322 aa).

Residues 10–15 (GSGQIG) and D34 contribute to the NAD(+) site. The substrate site is built by R83 and R89. NAD(+) contacts are provided by residues N96 and 119 to 121 (ITN). Residues N121 and R152 each coordinate substrate. H176 serves as the catalytic Proton acceptor.

The protein belongs to the LDH/MDH superfamily. MDH type 3 family.

The catalysed reaction is (S)-malate + NAD(+) = oxaloacetate + NADH + H(+). Its function is as follows. Catalyzes the reversible oxidation of malate to oxaloacetate. This chain is Malate dehydrogenase 1, found in Rhodopseudomonas palustris (strain BisB18).